The chain runs to 552 residues: Arginine--tRNA ligase (552 aa).

The 'HIGH' region signature appears at 123-133 (ANPTGPLTIGR).

It belongs to the class-I aminoacyl-tRNA synthetase family. Monomer.

The protein localises to the cytoplasm. It carries out the reaction tRNA(Arg) + L-arginine + ATP = L-arginyl-tRNA(Arg) + AMP + diphosphate. The polypeptide is Arginine--tRNA ligase (Chlorobium luteolum (strain DSM 273 / BCRC 81028 / 2530) (Pelodictyon luteolum)).